The primary structure comprises 249 residues: uncharacterized protein (249 aa).

Residue 11–34 (IFGGRSQIGGELARRLAAGATMVL) coordinates NADP(+). Serine 142 lines the substrate pocket. Tyrosine 155 acts as the Proton acceptor in catalysis.

Belongs to the short-chain dehydrogenases/reductases (SDR) family.

This is an uncharacterized protein from Mycobacterium tuberculosis (strain ATCC 25618 / H37Rv).